The primary structure comprises 98 residues: uncharacterized protein (98 aa).

In terms of domain architecture, HTH cro/C1-type spans 37-91 (LITSRQQLGISQKQLETLSGVKQPMIARIEKGQTNPQLETLLKLLAPLGKTLSIV). The H-T-H motif DNA-binding region spans 48 to 67 (QKQLETLSGVKQPMIARIEK).

This is an uncharacterized protein from Haemophilus influenzae (strain ATCC 51907 / DSM 11121 / KW20 / Rd).